A 507-amino-acid chain; its full sequence is Histidine ammonia-lyase (507 aa).

The 5-imidazolinone (Ala-Gly) cross-link spans 141–143; the sequence is ASG. S142 is subject to 2,3-didehydroalanine (Ser).

This sequence belongs to the PAL/histidase family. Post-translationally, contains an active site 4-methylidene-imidazol-5-one (MIO), which is formed autocatalytically by cyclization and dehydration of residues Ala-Ser-Gly.

It localises to the cytoplasm. The catalysed reaction is L-histidine = trans-urocanate + NH4(+). The protein operates within amino-acid degradation; L-histidine degradation into L-glutamate; N-formimidoyl-L-glutamate from L-histidine: step 1/3. This chain is Histidine ammonia-lyase, found in Natranaerobius thermophilus (strain ATCC BAA-1301 / DSM 18059 / JW/NM-WN-LF).